Reading from the N-terminus, the 287-residue chain is Large ribosomal subunit protein uL2 (287 aa).

Positions 221 to 287 are disordered; that stretch reads RGSVMNPCDH…SKRSRGGRDS (67 aa). Over residues 258–287 the composition is skewed to basic residues; it reads KTRKRNKPSNRYVLRKRRKTSKRSRGGRDS.

Belongs to the universal ribosomal protein uL2 family. As to quaternary structure, part of the 50S ribosomal subunit. Forms a bridge to the 30S subunit in the 70S ribosome.

Functionally, one of the primary rRNA binding proteins. Required for association of the 30S and 50S subunits to form the 70S ribosome, for tRNA binding and peptide bond formation. It has been suggested to have peptidyltransferase activity; this is somewhat controversial. Makes several contacts with the 16S rRNA in the 70S ribosome. The chain is Large ribosomal subunit protein uL2 from Parasynechococcus marenigrum (strain WH8102).